The chain runs to 448 residues: MFVDEVINNLKGNEFLNTTLLTKSNKNKLYYAVKQPDGNIKVVLPFVFENKNFLKLSEYKDGIEGATQRVIEEIKQEIIKKKRFLPLAGYFGRIYKALYEPLTVVNCNLNLGYDLWKVDKYNYIEGDKIYLMLRMIFKEKDSKEIVKQINELCNDLDKFIKKIPIDLLIDEAKNIINQKYLRDKLDELGLVCFIANNSKPARKYTEVRRHYRIAGPKDVNIPFECPEELEPIEIELKYGKKVKGLGIKKKEIFIITGRNAQGKTTLLQAIDSGRDDHLIGDGREFIITTKSLSKASTGSMEMSGQDISLFFQKLPPGIKGSPKAVYGTASGSMYMAYQIQRAIKNKTKLILIDEDNSAVNLLVSGVLSKWFEGVKSLAEIIMEDREKLGDSSFIIVTSSLDLLTALGDRAIYLEDHKAKYLDLTYFREELGRYYLELASKFIGVKIRE.

Residue 257–264 participates in ATP binding; the sequence is GRNAQGKT.

This is an uncharacterized protein from Methanocaldococcus jannaschii (strain ATCC 43067 / DSM 2661 / JAL-1 / JCM 10045 / NBRC 100440) (Methanococcus jannaschii).